We begin with the raw amino-acid sequence, 217 residues long: Octanoyltransferase (217 aa).

A BPL/LPL catalytic domain is found at 32–207 (SESHDELWIV…TFSQLLGYQH (176 aa)). Substrate-binding positions include 71–78 (RGGQVTYH), 138–140 (SLG), and 151–153 (GLA). C169 serves as the catalytic Acyl-thioester intermediate.

Belongs to the LipB family.

It localises to the cytoplasm. The catalysed reaction is octanoyl-[ACP] + L-lysyl-[protein] = N(6)-octanoyl-L-lysyl-[protein] + holo-[ACP] + H(+). It participates in protein modification; protein lipoylation via endogenous pathway; protein N(6)-(lipoyl)lysine from octanoyl-[acyl-carrier-protein]: step 1/2. Catalyzes the transfer of endogenously produced octanoic acid from octanoyl-acyl-carrier-protein onto the lipoyl domains of lipoate-dependent enzymes. Lipoyl-ACP can also act as a substrate although octanoyl-ACP is likely to be the physiological substrate. This chain is Octanoyltransferase, found in Shewanella baltica (strain OS223).